Reading from the N-terminus, the 349-residue chain is D-alanine--D-alanine ligase (349 aa).

In terms of domain architecture, ATP-grasp spans Gln-133 to Ser-335. Glu-163 to Glu-218 provides a ligand contact to ATP. Residues Asp-289, Glu-302, and Asn-304 each coordinate Mg(2+).

Belongs to the D-alanine--D-alanine ligase family. Requires Mg(2+) as cofactor. It depends on Mn(2+) as a cofactor.

The protein resides in the cytoplasm. The catalysed reaction is 2 D-alanine + ATP = D-alanyl-D-alanine + ADP + phosphate + H(+). Its pathway is cell wall biogenesis; peptidoglycan biosynthesis. Its function is as follows. Cell wall formation. The sequence is that of D-alanine--D-alanine ligase from Streptococcus mutans serotype c (strain ATCC 700610 / UA159).